The chain runs to 84 residues: UPF0153 protein YeiW (84 aa).

Belongs to the UPF0153 family.

The chain is UPF0153 protein YeiW (yeiW) from Escherichia coli (strain K12).